Here is a 108-residue protein sequence, read N- to C-terminus: Thioredoxin (108 aa).

One can recognise a Thioredoxin domain in the interval 2–108; it reads SEHIVNVTDA…QLAAFLDANI (107 aa). Cys33 and Cys36 are disulfide-bonded.

The protein belongs to the thioredoxin family.

Participates in various redox reactions through the reversible oxidation of its active center dithiol to a disulfide and catalyzes dithiol-disulfide exchange reactions. In Pseudomonas aeruginosa (strain ATCC 15692 / DSM 22644 / CIP 104116 / JCM 14847 / LMG 12228 / 1C / PRS 101 / PAO1), this protein is Thioredoxin (trxA).